The chain runs to 372 residues: L-selectin (372 aa).

A signal peptide spans 1–28 (MIFPRKCQSTQRDLWNIFKLWGWTMLCC). The propeptide occupies 29-38 (DFLAHHGTDC). Over 39-332 (WTYHYSENPM…FSMIKEGDYN (294 aa)) the chain is Extracellular. The 101-residue stretch at 55-155 (RFCRENYTDL…ACHKPKAALC (101 aa)) folds into the C-type lectin domain. Disulfide bonds link Cys57–Cys155, Cys128–Cys147, Cys128–Cys160, Cys160–Cys171, Cys165–Cys180, Cys182–Cys191, Cys197–Cys241, Cys227–Cys254, Cys259–Cys303, and Cys289–Cys316. 2 N-linked (GlcNAc...) asparagine glycosylation sites follow: Asn60 and Asn104. Residues Glu118, Asn120, Glu126, Asn143, and Asp144 each contribute to the Ca(2+) site. The EGF-like domain occupies 156–192 (YTASCQPWSCSGHGECVEIINNYTCNCDVGYYGPQCQ). Residue Asn177 is glycosylated (N-linked (GlcNAc...) asparagine). Sushi domains are found at residues 195-256 (IQCE…TCQV) and 257-318 (IQCE…ICQK). 4 N-linked (GlcNAc...) asparagine glycosylation sites follow: Asn226, Asn232, Asn246, and Asn271. A helical membrane pass occupies residues 333–355 (PLFIPVAVIVTAFSGLAFIIWLA). Over 356–372 (RRLKKGKKSKKSMDDPY) the chain is Cytoplasmic.

It belongs to the selectin/LECAM family. In terms of assembly, interaction with SELPLG/PSGL1 and PODXL2 is required for promoting recruitment and rolling of leukocytes. This interaction is dependent on the sialyl Lewis X glycan modification of SELPLG and PODXL2, and tyrosine sulfation modifications of SELPLG. Sulfation on 'Tyr-51' of SELPLG is important for L-selectin binding. Post-translationally, N-glycosylated.

The protein resides in the cell membrane. Its function is as follows. Calcium-dependent lectin that mediates cell adhesion by binding to glycoproteins on neighboring cells. Mediates the adherence of lymphocytes to endothelial cells of high endothelial venules in peripheral lymph nodes. Promotes initial tethering and rolling of leukocytes in endothelia. The protein is L-selectin (SELL) of Papio hamadryas (Hamadryas baboon).